The chain runs to 876 residues: DNA double-strand break repair Rad50 ATPase (876 aa).

ATP is bound by residues arginine 11, 31–37 (NGAGKTT), and glutamine 139. Coiled-coil stretches lie at residues 188–528 (RERV…EDRL) and 575–710 (SGVE…RKER). A Zinc-hook domain is found at 387–484 (EETLQSEYEE…RLESVRRELE (98 aa)). Residues cysteine 432 and cysteine 435 each coordinate Zn(2+).

This sequence belongs to the SMC family. RAD50 subfamily. Homodimer. Forms a heterotetramer composed of two Mre11 subunits and two Rad50 subunits. Requires Zn(2+) as cofactor.

Its function is as follows. Part of the Rad50/Mre11 complex, which is involved in the early steps of DNA double-strand break (DSB) repair. The complex may facilitate opening of the processed DNA ends to aid in the recruitment of HerA and NurA. Rad50 controls the balance between DNA end bridging and DNA resection via ATP-dependent structural rearrangements of the Rad50/Mre11 complex. The protein is DNA double-strand break repair Rad50 ATPase of Methanopyrus kandleri (strain AV19 / DSM 6324 / JCM 9639 / NBRC 100938).